We begin with the raw amino-acid sequence, 204 residues long: LexA repressor (204 aa).

The H-T-H motif DNA-binding region spans Val-27–Ala-47. Residues Ser-126 and Lys-164 each act as for autocatalytic cleavage activity in the active site.

The protein belongs to the peptidase S24 family. As to quaternary structure, homodimer.

The enzyme catalyses Hydrolysis of Ala-|-Gly bond in repressor LexA.. Functionally, represses a number of genes involved in the response to DNA damage (SOS response), including recA and lexA. In the presence of single-stranded DNA, RecA interacts with LexA causing an autocatalytic cleavage which disrupts the DNA-binding part of LexA, leading to derepression of the SOS regulon and eventually DNA repair. This is LexA repressor from Listeria innocua serovar 6a (strain ATCC BAA-680 / CLIP 11262).